A 528-amino-acid polypeptide reads, in one-letter code: NAD(P)H-quinone oxidoreductase chain 4 1 (528 aa).

A run of 14 helical transmembrane segments spans residues 7 to 27 (FPWLSVLVLLPLLAAFGIPLI), 32 to 52 (WVRWYALAVGAFDLGLMAYVF), 86 to 106 (LSLPLVLLSGLITTLSIVAAW), 114 to 134 (LFFFLLLLMYGAQVGVFLAQD), 136 to 156 (LLFFLMWEIELVPVYLLISIW), 168 to 188 (FILYTAAASIFILVGSLAMAF), 208 to 228 (ALELLAYAALLIAFGVKLPIF), 242 to 262 (SAPISMILAGVLLKMGGYGLI), 276 to 296 (FAPVLAVLGVVNIIYGALAAF), 310 to 330 (IAHMGFVLIGISAFTELGING), 331 to 351 (AVLQMISHGLIAAVLFFLTGI), 375 to 395 (FALFTAGSLASLALPGMSGFV), 417 to 437 (GIALLAAVGIILTPIYLLSML), and 463 to 483 (MAVALCLLLPILGIGFYPRLA).

This sequence belongs to the complex I subunit 4 family.

It localises to the cellular thylakoid membrane. The catalysed reaction is a plastoquinone + NADH + (n+1) H(+)(in) = a plastoquinol + NAD(+) + n H(+)(out). It catalyses the reaction a plastoquinone + NADPH + (n+1) H(+)(in) = a plastoquinol + NADP(+) + n H(+)(out). In terms of biological role, NDH-1 shuttles electrons from NAD(P)H, via FMN and iron-sulfur (Fe-S) centers, to quinones in the respiratory chain. The immediate electron acceptor for the enzyme in this species is believed to be plastoquinone. Couples the redox reaction to proton translocation (for every two electrons transferred, four hydrogen ions are translocated across the cytoplasmic membrane), and thus conserves the redox energy in a proton gradient. The chain is NAD(P)H-quinone oxidoreductase chain 4 1 from Synechococcus sp. (strain JA-2-3B'a(2-13)) (Cyanobacteria bacterium Yellowstone B-Prime).